The sequence spans 137 residues: Large ribosomal subunit protein eL28 (137 aa).

Position 2 is an N-acetylserine (S2). Residues K58 and K65 each participate in a glycyl lysine isopeptide (Lys-Gly) (interchain with G-Cter in SUMO2) cross-link. Position 115 is a phosphoserine (S115).

It belongs to the eukaryotic ribosomal protein eL28 family. Component of the large ribosomal subunit.

It is found in the cytoplasm. Its function is as follows. Component of the large ribosomal subunit. The ribosome is a large ribonucleoprotein complex responsible for the synthesis of proteins in the cell. This chain is Large ribosomal subunit protein eL28 (Rpl28), found in Mus musculus (Mouse).